A 330-amino-acid chain; its full sequence is D-xylose-binding periplasmic protein (330 aa).

The N-terminal stretch at 1–23 (MKIKNILLTLCTSLLLTNVAAHA) is a signal peptide.

Belongs to the bacterial solute-binding protein 2 family.

It is found in the periplasm. Involved in the high-affinity D-xylose membrane transport system. Binds with high affinity to xylose. The chain is D-xylose-binding periplasmic protein (xylF) from Escherichia coli (strain K12).